The primary structure comprises 206 residues: Insecticyanin-B (206 aa).

The first 17 residues, 1-17 (MQRFLVFTIVAVATAAA), serve as a signal peptide directing secretion. Disulfide bonds link cysteine 26/cysteine 136 and cysteine 60/cysteine 192.

This sequence belongs to the calycin superfamily. Lipocalin family. Homotetramer. In terms of tissue distribution, synthesized only in the caterpillars, apparently by the epidermis and secreted into the hemolymph. The protein is passed over from the larval hemolymph to that of pupae and adults and is sequestered in the eggs.

It localises to the secreted. Functionally, this protein binds a chromophore: biliverdin IX, isomer gamma. Mixed with lipoprotein-bound carotenes, this blue protein provides hornworms with their green cryptic coloration which serves a camouflage. The polypeptide is Insecticyanin-B (INSB) (Manduca sexta (Tobacco hawkmoth)).